A 90-amino-acid polypeptide reads, in one-letter code: uncharacterized protein (90 aa).

The signal sequence occupies residues 1-20; that stretch reads MEKLFVLVFALALLAFSSDA.

The protein localises to the secreted. This is an uncharacterized protein from Mus musculus (Mouse).